A 105-amino-acid chain; its full sequence is Dynein axonemal light chain 4 (105 aa).

The protein belongs to the dynein light chain family. Consists of at least two heavy chains and a number of intermediate and light chains.

It is found in the cytoplasm. It localises to the cytoskeleton. The protein resides in the cilium axoneme. Force generating protein of respiratory cilia. Produces force towards the minus ends of microtubules. Dynein has ATPase activity. The polypeptide is Dynein axonemal light chain 4 (DNAL4) (Bos taurus (Bovine)).